Here is a 664-residue protein sequence, read N- to C-terminus: MTNELLIEIGTEELPAGVINPALDYLKDKINSLLNARQVKTYGTPRRLTLYFKDFENERKEKKEVIWGPPKNVAYDEKGNPTKALEGFLKKNNASLEEVKVLKKDKGEYVAIVRKVIEKSPIEKLQEEFEEILLSVPFPKRMRWTSSKRITFSRPVRWILALFNGQVLKLRFGELESSNKTYGHRFLSKGEVTINNPADYEKTLKEHYVIPDFNERKEIILRALEKSSQEVGGKPSYPEGLVEEVTNLVEYPFPVLGKFDEKYLELPPLVITTVAAHHQRFFCFEKDGKLLNYFLGISNNKPNEKIKEGYEKVLRARLEDALFFYREDLKKDLKSLIPELKKVLFHPKVGSMYEKEERMEKIAQKLCPLLKCEWEKVKEAVWLSKVDLLTEMVKELDELQGYMGYVYAKAQGYDEEVAKALWEQYFPRSLEDKVPETTTGTILSLSDKIDNLYSFFKAGEIPKGSSDPYGLRRSAFGIIKIVDVKNLDLNLEDFKEIYGEFKQYPKLVEFLKQRLISYLEDYPVDIVRAVLNVYSPMEPYKVINSVRVLYEASKSPEFPSVVEAAKRVIRIIPKDWKNYEVDEKLLSEEAERELYQKLTEFENKELKSPLELLPLKEYIDKFFDNVKVMAEDEKIRNNRISLLKRVENLFRTFGDFNEIVIKEG.

The protein belongs to the class-II aminoacyl-tRNA synthetase family. In terms of assembly, tetramer of two alpha and two beta subunits.

The protein localises to the cytoplasm. It catalyses the reaction tRNA(Gly) + glycine + ATP = glycyl-tRNA(Gly) + AMP + diphosphate. This Aquifex aeolicus (strain VF5) protein is Glycine--tRNA ligase beta subunit (glyS).